The sequence spans 239 residues: 1-(5-phosphoribosyl)-5-[(5-phosphoribosylamino)methylideneamino] imidazole-4-carboxamide isomerase (239 aa).

D8 (proton acceptor) is an active-site residue. D129 serves as the catalytic Proton donor.

The protein belongs to the HisA/HisF family.

The protein resides in the cytoplasm. It carries out the reaction 1-(5-phospho-beta-D-ribosyl)-5-[(5-phospho-beta-D-ribosylamino)methylideneamino]imidazole-4-carboxamide = 5-[(5-phospho-1-deoxy-D-ribulos-1-ylimino)methylamino]-1-(5-phospho-beta-D-ribosyl)imidazole-4-carboxamide. Its pathway is amino-acid biosynthesis; L-histidine biosynthesis; L-histidine from 5-phospho-alpha-D-ribose 1-diphosphate: step 4/9. In Bacillus mycoides (strain KBAB4) (Bacillus weihenstephanensis), this protein is 1-(5-phosphoribosyl)-5-[(5-phosphoribosylamino)methylideneamino] imidazole-4-carboxamide isomerase.